The sequence spans 29 residues: Cyclotide mra2 (29 aa).

3 disulfides stabilise this stretch: C4–C19, C8–C21, and C13–C26.

Post-translationally, this is a cyclic peptide. In terms of processing, contains 3 disulfide bonds.

Probably participates in a plant defense mechanism. The chain is Cyclotide mra2 from Melicytus ramiflorus (Whitey wood).